The chain runs to 268 residues: Probable chemotaxis protein methyltransferase (268 aa).

A CheR-type methyltransferase domain is found at methionine 1–lysine 262. S-adenosyl-L-methionine-binding positions include asparagine 60, threonine 62, arginine 66, glutamate 104, aspartate 130, asparagine 188 to leucine 189, and arginine 205 to asparagine 206.

It carries out the reaction L-glutamyl-[protein] + S-adenosyl-L-methionine = [protein]-L-glutamate 5-O-methyl ester + S-adenosyl-L-homocysteine. Its function is as follows. Methylation of the membrane-bound methyl-accepting chemotaxis proteins (MCP) to form gamma-glutamyl methyl ester residues in MCP. This is Probable chemotaxis protein methyltransferase (cheRch1) from Rhizobium etli (strain ATCC 51251 / DSM 11541 / JCM 21823 / NBRC 15573 / CFN 42).